The sequence spans 586 residues: Pescadillo homolog (586 aa).

A required for 28S ribosomal RNA processing region spans residues 1–54; sequence MGGLEKKKYERGSATNYITRNKARKKLQLSLPDFRRLCILKGIYPHEPKHKKKV. The tract at residues 1–257 is sufficient for nucleolar localization; sequence MGGLEKKKYE…PKIESQAQAE (257 aa). At Lys-98 the chain carries N6-acetyllysine. Positions 305–414 are sufficient for interaction with MAP1B; it reads VTAQEEDRRK…LLLPVAEYFP (110 aa). The 94-residue stretch at 321 to 414 folds into the BRCT domain; the sequence is KHKKLFEGLK…LLLPVAEYFP (94 aa). Residues 447–508 form a disordered region; sequence GEDPGNLEEE…QQRLGGKKPQ (62 aa). Acidic residues predominate over residues 451–491; the sequence is GNLEEEEEDEDDEGDDSEGDGDVAVENEEEVVEAESEEEEE. Residue Lys-515 forms a Glycyl lysine isopeptide (Lys-Gly) (interchain with G-Cter in SUMO1); alternate linkage. Lys-515 participates in a covalent cross-link: Glycyl lysine isopeptide (Lys-Gly) (interchain with G-Cter in SUMO2); alternate. Residues 537–586 form a required for 28S ribosomal RNA processing region; sequence MMKKREKYLYQKIMFGKRRKIREANKLAEKRKAHDDAVRSEKKAKRTRPV. A compositionally biased stretch (basic and acidic residues) spans 562-577; that stretch reads KLAEKRKAHDDAVRSE. The interval 562–586 is disordered; that stretch reads KLAEKRKAHDDAVRSEKKAKRTRPV.

Belongs to the pescadillo family. Component of the PeBoW complex, composed of BOP1, PES1 and WDR12. The complex is held together by BOP1, which interacts with PES1 via its N-terminal domain and with WDR12 via a high-affinity interaction between the seven-bladed beta-propeller domains of the 2 proteins. The PeBoW complex associates with the 66S pre-ribosome. The PeBoW complex also associates with DDX27, PES1 interacts directly with DDX27. Interacts with IRS1 and UBTF. May interact with MAP1B. Post-translationally, sumoylated.

It localises to the nucleus. It is found in the nucleolus. The protein resides in the nucleoplasm. Its subcellular location is the chromosome. Its function is as follows. Component of the PeBoW complex, which is required for maturation of 28S and 5.8S ribosomal RNAs and formation of the 60S ribosome. The chain is Pescadillo homolog (Pes1) from Rattus norvegicus (Rat).